The sequence spans 265 residues: Cytochrome c oxidase subunit 3 (265 aa).

6 helical membrane-spanning segments follow: residues 41 to 61, 85 to 105, 137 to 157, 162 to 182, 200 to 220, and 245 to 265; these read GGARLLSLGLIFILYTMFVWW, GFILFIVSEVMFFFAFFWAFF, TLILLSSGAAVTWAHHAILAG, AVYALVATVLLALVFTGFQGM, FFLATGFHGFHVIIGTLFLII, and WHFVDVVWLFLFVSIYWWGGI.

The protein belongs to the cytochrome c oxidase subunit 3 family. Component of the cytochrome c oxidase (complex IV, CIV), a multisubunit enzyme composed of a catalytic core of 3 subunits and several supernumerary subunits. The complex exists as a monomer or a dimer and forms supercomplexes (SCs) in the inner mitochondrial membrane with ubiquinol-cytochrome c oxidoreductase (cytochrome b-c1 complex, complex III, CIII).

The protein resides in the mitochondrion inner membrane. It carries out the reaction 4 Fe(II)-[cytochrome c] + O2 + 8 H(+)(in) = 4 Fe(III)-[cytochrome c] + 2 H2O + 4 H(+)(out). Functionally, component of the cytochrome c oxidase, the last enzyme in the mitochondrial electron transport chain which drives oxidative phosphorylation. The respiratory chain contains 3 multisubunit complexes succinate dehydrogenase (complex II, CII), ubiquinol-cytochrome c oxidoreductase (cytochrome b-c1 complex, complex III, CIII) and cytochrome c oxidase (complex IV, CIV), that cooperate to transfer electrons derived from NADH and succinate to molecular oxygen, creating an electrochemical gradient over the inner membrane that drives transmembrane transport and the ATP synthase. Cytochrome c oxidase is the component of the respiratory chain that catalyzes the reduction of oxygen to water. Electrons originating from reduced cytochrome c in the intermembrane space (IMS) are transferred via the dinuclear copper A center (CU(A)) of subunit 2 and heme A of subunit 1 to the active site in subunit 1, a binuclear center (BNC) formed by heme A3 and copper B (CU(B)). The BNC reduces molecular oxygen to 2 water molecules using 4 electrons from cytochrome c in the IMS and 4 protons from the mitochondrial matrix. This Arabidopsis thaliana (Mouse-ear cress) protein is Cytochrome c oxidase subunit 3 (COX3).